Consider the following 318-residue polypeptide: MSNVKHSKLLILGSGPAGYTAAVYAARANLKPVLVTGMQQGGQLTTTTEVENWPGDAEGLTGPALMERMKEHAERFDTEIVFDHINSVDLSSRPFRLTGDSQEYTCDALIISTGASAKYLGLESEEAFKGRGVSACATCDGFFYRNQKVAVVGGGNTAVEEALYLSNIASEVHLVHRRDSFRSEKILIDRLMDKVANGNIVLHTHRTLDEVLGDEMGVTGVRLKDTQSDMTENLDVMGVFIAIGHQPNSQIFEGQLEMKNGYIVVKSGLEGNATQTSIEGVFAAGDVMDHNYRQAITSAGTGCMAALDAERYLDSQGK.

36–43 (TGMQQGGQ) lines the FAD pocket. Cys136 and Cys139 form a disulfide bridge. FAD is bound at residue 286-295 (DVMDHNYRQA).

This sequence belongs to the class-II pyridine nucleotide-disulfide oxidoreductase family. Homodimer. FAD serves as cofactor.

The protein resides in the cytoplasm. The catalysed reaction is [thioredoxin]-dithiol + NADP(+) = [thioredoxin]-disulfide + NADPH + H(+). This chain is Thioredoxin reductase (trxB), found in Vibrio cholerae serotype O1 (strain ATCC 39315 / El Tor Inaba N16961).